The primary structure comprises 457 residues: Flavohemoprotein-1 (457 aa).

Positions 2-157 (ALSEDTIKAV…LADLLIKREE (156 aa)) constitute a Globin domain. Histidine 106 lines the heme b pocket. Active-site charge relay system residues include tyrosine 116 and glutamate 156. The reductase stretch occupies residues 168-456 (GGWRQTRTFR…FEMFGPFKAS (289 aa)). Positions 171 to 278 (RQTRTFRVEE…APPYGDFFLR (108 aa)) constitute an FAD-binding FR-type domain. Residues tyrosine 210 and 227 to 230 (RQYS) contribute to the FAD site. 320 to 325 (GIGQTP) serves as a coordination point for NADP(+). 449–452 (MFGP) contacts FAD.

The protein belongs to the globin family. Two-domain flavohemoproteins subfamily. In the C-terminal section; belongs to the flavoprotein pyridine nucleotide cytochrome reductase family. As to quaternary structure, monomer. Requires heme b as cofactor. It depends on FAD as a cofactor.

The enzyme catalyses 2 nitric oxide + NADPH + 2 O2 = 2 nitrate + NADP(+) + H(+). The catalysed reaction is 2 nitric oxide + NADH + 2 O2 = 2 nitrate + NAD(+) + H(+). Flavohemoprotein involved in nitric oxide (NO) detoxification in an aerobic process, termed nitric oxide dioxygenase (NOD) reaction that utilizes O(2) and NAD(P)H to convert NO to nitrate, which protects the protozoan parasite from various noxious nitrogen compounds. Therefore, plays a central role in the inducible response to nitrosative stress. May also be involved in O(2) detoxification. The chain is Flavohemoprotein-1 (hmpA-1) from Giardia intestinalis (strain P15) (Giardia lamblia).